The sequence spans 414 residues: MATGPVVHPQPVRGDPIDLKNAAAKNRRALGDIGNVDSLIGVEGGKLNRPITRNFRAQLLENAQVAAAANKKAPILDGVTKKQEVVRAVQKKARGDKREPSKPIEVIVISPDTNEVAKAKENKKKVTYSSVLDARSKAASKTLDIDYVDKENDLAAVEYVEDMYIFYKEVVNESKPQMYMHTQPEIDEKMRSILIDWLVEVHVKFDLSPETLYLTVNIIDRFLSLKTVPRRELQLVGVSALLIASKYEEIWPPQVNDLVYVTDNSYNSRQILVMEKTILGNLEWYLTVPTQYVFLVRFIKASGSDQKLENLVHFLAELGLMHHDSLMFCPSMLAASAVYTARCCLNKTPTWTDTLKFHTGYSESQLMDCSKLLAFIHSKAGESKLRGVLKKYSKLGRGAVALISPAKSLMSSAP.

Belongs to the cyclin family. Cyclin AB subfamily. As to expression, expressed in roots, stems and flowers.

This is Cyclin-B1-3 (CYCB1-3) from Arabidopsis thaliana (Mouse-ear cress).